The primary structure comprises 536 residues: Peptide chain release factor 3 (536 aa).

The region spanning 13–281 (SHRRTFAIIS…ALIDWAPAPQ (269 aa)) is the tr-type G domain. GTP contacts are provided by residues 22–29 (SHPDAGKT), 90–94 (DTPGH), and 144–147 (NKCD).

It belongs to the TRAFAC class translation factor GTPase superfamily. Classic translation factor GTPase family. PrfC subfamily.

The protein resides in the cytoplasm. In terms of biological role, increases the formation of ribosomal termination complexes and stimulates activities of RF-1 and RF-2. It binds guanine nucleotides and has strong preference for UGA stop codons. It may interact directly with the ribosome. The stimulation of RF-1 and RF-2 is significantly reduced by GTP and GDP, but not by GMP. This is Peptide chain release factor 3 from Chromobacterium violaceum (strain ATCC 12472 / DSM 30191 / JCM 1249 / CCUG 213 / NBRC 12614 / NCIMB 9131 / NCTC 9757 / MK).